Reading from the N-terminus, the 464-residue chain is Chromosomal replication initiator protein DnaA (464 aa).

Residues 1 to 74 (MDAVGYEVFW…ERKFLELSGH (74 aa)) are domain I, interacts with DnaA modulators. The tract at residues 74–117 (HPIKLLFAVKKGTPHGNTAPPKHVHTYLEKNSPAEVPSKKSFHP) is domain II. The segment at 118–341 (DLNRDYTFEN…GALTKIIAFI (224 aa)) is domain III, AAA+ region. Positions 162, 164, 165, and 166 each coordinate ATP. Positions 342–464 (EVSGSITIDI…LKSKVQDSIR (123 aa)) are domain IV, binds dsDNA.

This sequence belongs to the DnaA family. Oligomerizes as a right-handed, spiral filament on DNA at oriC.

The protein resides in the cytoplasm. Plays an essential role in the initiation and regulation of chromosomal replication. ATP-DnaA binds to the origin of replication (oriC) to initiate formation of the DNA replication initiation complex once per cell cycle. Binds the DnaA box (a 9 base pair repeat at the origin) and separates the double-stranded (ds)DNA. Forms a right-handed helical filament on oriC DNA; dsDNA binds to the exterior of the filament while single-stranded (ss)DNA is stabiized in the filament's interior. The ATP-DnaA-oriC complex binds and stabilizes one strand of the AT-rich DNA unwinding element (DUE), permitting loading of DNA polymerase. After initiation quickly degrades to an ADP-DnaA complex that is not apt for DNA replication. Binds acidic phospholipids. This is Chromosomal replication initiator protein DnaA from Treponema pallidum (strain Nichols).